We begin with the raw amino-acid sequence, 633 residues long: Chaperone protein DnaK (633 aa).

The residue at position 198 (threonine 198) is a Phosphothreonine; by autocatalysis. Residues 599–633 (QQASQETPGDGDAGAAGAKKKDDDDVVDADYEEVK) form a disordered region. Acidic residues predominate over residues 622–633 (DDVVDADYEEVK).

The protein belongs to the heat shock protein 70 family.

In terms of biological role, acts as a chaperone. The chain is Chaperone protein DnaK from Desulfotalea psychrophila (strain LSv54 / DSM 12343).